We begin with the raw amino-acid sequence, 243 residues long: Carboxy-S-adenosyl-L-methionine synthase (243 aa).

S-adenosyl-L-methionine-binding positions include Y40, 65 to 67, 90 to 91, 118 to 119, N133, and R200; these read GSS, DN, and DI.

The protein belongs to the class I-like SAM-binding methyltransferase superfamily. Cx-SAM synthase family. Homodimer.

The enzyme catalyses prephenate + S-adenosyl-L-methionine = carboxy-S-adenosyl-L-methionine + 3-phenylpyruvate + H2O. In terms of biological role, catalyzes the conversion of S-adenosyl-L-methionine (SAM) to carboxy-S-adenosyl-L-methionine (Cx-SAM). The protein is Carboxy-S-adenosyl-L-methionine synthase of Shewanella frigidimarina (strain NCIMB 400).